The chain runs to 873 residues: Probable beta-glucosidase A (873 aa).

A signal peptide spans Met-1–Ala-19. N-linked (GlcNAc...) asparagine glycosylation is found at Asn-71, Asn-222, and Asn-263. Residue Asp-291 is part of the active site. Asn-326, Asn-333, Asn-365, Asn-453, Asn-534, Asn-553, Asn-575, Asn-679, and Asn-725 each carry an N-linked (GlcNAc...) asparagine glycan. The interval Glu-730–Pro-765 is disordered.

The protein belongs to the glycosyl hydrolase 3 family.

The protein resides in the secreted. The catalysed reaction is Hydrolysis of terminal, non-reducing beta-D-glucosyl residues with release of beta-D-glucose.. It functions in the pathway glycan metabolism; cellulose degradation. Functionally, beta-glucosidases are one of a number of cellulolytic enzymes involved in the degradation of cellulosic biomass. Catalyzes the last step releasing glucose from the inhibitory cellobiose. In Neosartorya fischeri (strain ATCC 1020 / DSM 3700 / CBS 544.65 / FGSC A1164 / JCM 1740 / NRRL 181 / WB 181) (Aspergillus fischerianus), this protein is Probable beta-glucosidase A (bglA).